The following is a 426-amino-acid chain: Stationary phase-inducible protein CsiE (426 aa).

PRD domains are found at residues 120 to 225 (ARNF…DPLR) and 229 to 336 (QRDR…ENDL).

The chain is Stationary phase-inducible protein CsiE (csiE) from Escherichia coli (strain K12).